Here is a 314-residue protein sequence, read N- to C-terminus: 3'-5' exoribonuclease YhaM (314 aa).

An HD domain is found at 163 to 279; the sequence is HVVSMLHLAK…LHYIDNLDAK (117 aa).

The protein belongs to the YhaM family.

Shows a 3'-5' exoribonuclease activity. This Bacillus pumilus (strain SAFR-032) protein is 3'-5' exoribonuclease YhaM.